The following is a 346-amino-acid chain: Autophagy-related protein 3 (346 aa).

A flexible region region spans residues 85 to 161 (DFAGDAGHEE…DDDDEAIIRA (77 aa)). The active-site Glycyl thioester intermediate is Cys-238. The segment at 242 to 322 (SVMKTLLDRA…DQEVAIRVDQ (81 aa)) is handle region.

The protein belongs to the ATG3 family. Monomer. Interacts with apg-6/atg8 through an intermediate thioester bond through the C-terminal Gly of apg-6/atg8. Also interacts with the 40 amino acid C-terminal region of the E1-like apg-5/atg7 enzyme. Also interacts with the atg12-apg-4/atg5 conjugate.

Its subcellular location is the cytoplasm. Its function is as follows. E2 conjugating enzyme required for the cytoplasm to vacuole transport (Cvt) and autophagy. Required for selective autophagic degradation of the nucleus (nucleophagy) as well as for mitophagy which contributes to regulate mitochondrial quantity and quality by eliminating the mitochondria to a basal level to fulfill cellular energy requirements and preventing excess ROS production. Responsible for the E2-like covalent binding of phosphatidylethanolamine to the C-terminal Gly of apg-6/atg8. The atg12-apg-4/atg5 conjugate plays a role of an E3 and promotes the transfer of apg-6/atg8 from apg-3/atg3 to phosphatidylethanolamine (PE). This step is required for the membrane association of apg-6/atg8. The formation of the apg-6/atg8-phosphatidylethanolamine conjugate is essential for autophagy and for the cytoplasm to vacuole transport (Cvt). The apg-6/atg8-PE conjugate mediates tethering between adjacent membranes and stimulates membrane hemifusion, leading to expansion of the autophagosomal membrane during autophagy. This is Autophagy-related protein 3 (apg-3) from Neurospora crassa (strain ATCC 24698 / 74-OR23-1A / CBS 708.71 / DSM 1257 / FGSC 987).